A 373-amino-acid chain; its full sequence is Phospho-N-acetylmuramoyl-pentapeptide-transferase (373 aa).

The next 11 helical transmembrane spans lie at 16–36, 46–66, 93–113, 120–140, 157–177, 185–205, 216–236, 242–262, 270–290, 298–318, and 350–369; these read WWTK…AASF, LLSL…SWGI, PTMG…FVSV, QLLA…FDDW, LLLQ…QHWI, LGIS…VFLA, LDGL…VQLM, GNPV…GFLM, VFMG…VAIL, LVMG…VWVF, and MVVR…GLLL.

This sequence belongs to the glycosyltransferase 4 family. MraY subfamily. Mg(2+) serves as cofactor.

The protein resides in the cell inner membrane. The catalysed reaction is UDP-N-acetyl-alpha-D-muramoyl-L-alanyl-gamma-D-glutamyl-meso-2,6-diaminopimeloyl-D-alanyl-D-alanine + di-trans,octa-cis-undecaprenyl phosphate = di-trans,octa-cis-undecaprenyl diphospho-N-acetyl-alpha-D-muramoyl-L-alanyl-D-glutamyl-meso-2,6-diaminopimeloyl-D-alanyl-D-alanine + UMP. It participates in cell wall biogenesis; peptidoglycan biosynthesis. In terms of biological role, catalyzes the initial step of the lipid cycle reactions in the biosynthesis of the cell wall peptidoglycan: transfers peptidoglycan precursor phospho-MurNAc-pentapeptide from UDP-MurNAc-pentapeptide onto the lipid carrier undecaprenyl phosphate, yielding undecaprenyl-pyrophosphoryl-MurNAc-pentapeptide, known as lipid I. This chain is Phospho-N-acetylmuramoyl-pentapeptide-transferase, found in Prochlorococcus marinus (strain MIT 9313).